The chain runs to 520 residues: FAD-linked oxidoreductase OXR2 (520 aa).

A signal peptide spans 1 to 23 (MKSFSLLASAGLATLASLPLTMA). 4 N-linked (GlcNAc...) asparagine glycosylation sites follow: N77, N220, N378, and N390. One can recognise an FAD-binding PCMH-type domain in the interval 79–251 (SRPTIRLVVV…TSFQSKIYPR (173 aa)).

It belongs to the oxygen-dependent FAD-linked oxidoreductase family. Requires FAD as cofactor.

It functions in the pathway polyketide biosynthesis. In terms of biological role, FAD-linked oxidoreductase; part of the gene cluster that mediates the biosynthesis of pyriculol and pyriculariol, two heptaketides that induce lesion formation upon application on rice leaves but are dispensable for pathogenicity. The highly reducing polyketide synthase synthesizes the heptaketide backbone of pyriculol and pyriculariol. Pyriculol and pyriculariol contain several hydroxyl moieties and double bonds, so it can be assumed that several reduction steps occur during biosynthesis. These reactions could be executed by PKS19 itself or partly by the tailoring enzymes OXR1, OXR2, RED1, RED2 or RED3, identified within the cluster. The FAD-linked oxidoreductase OXR1 is the only tailoring enzyme for which the function has been determined yet, and is involved in the oxidation of dihydropyriculol and dihydropyriculariol into pyriculol and pyriculariol, respectively. The chain is FAD-linked oxidoreductase OXR2 from Pyricularia oryzae (strain 70-15 / ATCC MYA-4617 / FGSC 8958) (Rice blast fungus).